Consider the following 85-residue polypeptide: uncharacterized protein (85 aa).

This is an uncharacterized protein from Saccharomyces cerevisiae (strain ATCC 204508 / S288c) (Baker's yeast).